The chain runs to 445 residues: D-serine dehydratase (445 aa).

Lysine 118 carries the N6-(pyridoxal phosphate)lysine modification.

This sequence belongs to the serine/threonine dehydratase family. DsdA subfamily. In terms of assembly, monomer. Pyridoxal 5'-phosphate serves as cofactor.

It catalyses the reaction D-serine = pyruvate + NH4(+). The chain is D-serine dehydratase from Serratia proteamaculans (strain 568).